The following is a 389-amino-acid chain: S-adenosylmethionine synthase (389 aa).

His-19 contacts ATP. Asp-21 is a Mg(2+) binding site. K(+) is bound at residue Glu-47. L-methionine contacts are provided by Glu-60 and Gln-103. Positions 103-113 (QSVDIAQGVSR) are flexible loop. ATP is bound by residues 168–170 (DGK), 234–235 (RF), Asp-243, 249–250 (RK), Ala-266, and Lys-270. Asp-243 contacts L-methionine. Lys-274 serves as a coordination point for L-methionine.

This sequence belongs to the AdoMet synthase family. In terms of assembly, homotetramer; dimer of dimers. Mg(2+) serves as cofactor. It depends on K(+) as a cofactor.

The protein resides in the cytoplasm. The catalysed reaction is L-methionine + ATP + H2O = S-adenosyl-L-methionine + phosphate + diphosphate. Its pathway is amino-acid biosynthesis; S-adenosyl-L-methionine biosynthesis; S-adenosyl-L-methionine from L-methionine: step 1/1. Its function is as follows. Catalyzes the formation of S-adenosylmethionine (AdoMet) from methionine and ATP. The overall synthetic reaction is composed of two sequential steps, AdoMet formation and the subsequent tripolyphosphate hydrolysis which occurs prior to release of AdoMet from the enzyme. The polypeptide is S-adenosylmethionine synthase (Solidesulfovibrio magneticus (strain ATCC 700980 / DSM 13731 / RS-1) (Desulfovibrio magneticus)).